Here is a 453-residue protein sequence, read N- to C-terminus: MVEDTASVAALYRSYLTPLGIDINIVGTGRDAIESLNHRIPDLILLDLRLPDMTGMDVLHAVKKSHPDVPIIFMTAHGSIDTAVEAMRHGSQDFLIKPCEADRLRVTVNNAIRKATKLKNEADNPGNQNYQGFIGSSQTMQQVYRTIDSAASSKASIFITGESGTGKEVCAEAIHAASKRGDKPFIAINCAAIPKDLIESELFGHVKGAFTGAANDRQGAAELADGGTLFLDELCEMDLDLQTKLLRFIQTGTFQKVGSSKMKSVDVRFVCATNRDPWKEVQEGRFREDLYYRLYVIPLHLPPLRERGKDVIEIAYSLLGYMSHEEGKSFVRFAQDVIERFNSYEWPGNVRQLQNVLRNIVVLNNGKEITLDMLPPPLNQPVVRQSVAKFIEPDIMTVSDIMPLWMTEKMAIEQAIQACEGNIPRAAGYLDVSPSTIYRKLQAWNSKDEKQNV.

One can recognise a Response regulatory domain in the interval 1–112 (MVEDTASVAA…RLRVTVNNAI (112 aa)). Asp47 is modified (4-aspartylphosphate). Residues 133-362 (FIGSSQTMQQ…LQNVLRNIVV (230 aa)) enclose the Sigma-54 factor interaction domain. ATP contacts are provided by residues 161-168 (GESGTGKE) and 224-233 (ADGGTLFLDE).

Acts negatively to control the expression of luminescence. At low cell density, LuxO is phosphorylated, and together with sigma-54, causes repression of the luxCDABEGH operon. This repression could be indirect, LuxO could activate a negative regulator of luminescence. At high cell density, LuxO is dephosphorylated and inactive, therefore the luxCDABEGH operon is not repressed and light is emitted. LuxO and sigma-54 have also a role in activating the production of siderophore and in regulating the rugose colony morphology phenotype. The chain is Luminescence regulatory protein LuxO (luxO) from Vibrio campbellii (strain ATCC BAA-1116).